We begin with the raw amino-acid sequence, 343 residues long: Fc receptor-like protein 1 (343 aa).

The signal sequence occupies residues 1 to 16 (MLPWLLLLICALPCEP). 2 Ig-like C2-type domains span residues 17-109 (AGIS…VSIH) and 117-200 (PVLT…EVVA). At 17–219 (AGISDVSLKT…PTENGISHLS (203 aa)) the chain is on the extracellular side. A glycan (N-linked (GlcNAc...) asparagine) is linked at Asn51. The cysteines at positions 138 and 185 are disulfide-linked. N-linked (GlcNAc...) asparagine glycosylation is present at Asn202. The chain crosses the membrane as a helical span at residues 220 to 240 (LGLTGWLLGCLSPITMALIFC). Over 241 to 343 (YWLKRKIGRQ…IAHMDYEDAM (103 aa)) the chain is Cytoplasmic. Residues 251 to 278 (SEDPVRSPPQTVLQGSTYPKSPDSRQPE) form a disordered region. Polar residues predominate over residues 258 to 269 (PPQTVLQGSTYP). 3 consecutive short sequence motifs (ITIM motif) follow at residues 266–271 (STYPKS), 279–284 (PLYENV), and 291–296 (EVYSLV). Phosphotyrosine is present on Tyr281. The residue at position 297 (Tyr297) is a Phosphotyrosine. 2 short sequence motifs (ITIM motif) span residues 325–330 (GLYSKP) and 337–342 (MDYEDA).

As to quaternary structure, interacts with ABL1. Interacts with GRB2 and SOS1. Interacts with SHIP-1/INPP5D. Post-translationally, phosphorylated on C-terminal region upon BCR ligation leading to recruitment of ABL1. Widely expressed. Expressed in B-cells at the various stages of differentiation.

It localises to the cell membrane. Functionally, may function as an activating coreceptor in B-cells. May function in B-cells activation and differentiation. This chain is Fc receptor-like protein 1 (Fcrl1), found in Mus musculus (Mouse).